A 190-amino-acid polypeptide reads, in one-letter code: Fe/S biogenesis protein NfuA (190 aa).

Residues Cys-148 and Cys-151 each coordinate [4Fe-4S] cluster.

This sequence belongs to the NfuA family. As to quaternary structure, homodimer. It depends on [4Fe-4S] cluster as a cofactor.

Functionally, involved in iron-sulfur cluster biogenesis. Binds a 4Fe-4S cluster, can transfer this cluster to apoproteins, and thereby intervenes in the maturation of Fe/S proteins. Could also act as a scaffold/chaperone for damaged Fe/S proteins. The protein is Fe/S biogenesis protein NfuA of Baumannia cicadellinicola subsp. Homalodisca coagulata.